The chain runs to 257 residues: Thiazole synthase (257 aa).

Catalysis depends on Lys-99, which acts as the Schiff-base intermediate with DXP. 1-deoxy-D-xylulose 5-phosphate-binding positions include Gly-160, 186–187 (AG), and 208–209 (NT).

It belongs to the ThiG family. As to quaternary structure, homotetramer. Forms heterodimers with either ThiH or ThiS.

Its subcellular location is the cytoplasm. The catalysed reaction is [ThiS sulfur-carrier protein]-C-terminal-Gly-aminoethanethioate + 2-iminoacetate + 1-deoxy-D-xylulose 5-phosphate = [ThiS sulfur-carrier protein]-C-terminal Gly-Gly + 2-[(2R,5Z)-2-carboxy-4-methylthiazol-5(2H)-ylidene]ethyl phosphate + 2 H2O + H(+). The protein operates within cofactor biosynthesis; thiamine diphosphate biosynthesis. Functionally, catalyzes the rearrangement of 1-deoxy-D-xylulose 5-phosphate (DXP) to produce the thiazole phosphate moiety of thiamine. Sulfur is provided by the thiocarboxylate moiety of the carrier protein ThiS. In vitro, sulfur can be provided by H(2)S. This Thermodesulfovibrio yellowstonii (strain ATCC 51303 / DSM 11347 / YP87) protein is Thiazole synthase.